The primary structure comprises 501 residues: MLATAGSLIATIWAALHLRTLLVAALTFLLLADYFKTRRPKNYPPGPWGLPFVGNIFQLDFGQPHLSIQPFVKKYGNIFSLNLGDITSVVITGLPLIKETFTHIEQNILNRPLSVMQERITNKNGLIFSSGQTWKEQRRFALMTLRNFGLGKKSLEQRMQEEAHYLVEAIREEKGKPFNPHFSINNAVSNIICSVTFGERFEYHDSRFQEMLRLLDEVMYLETTMISQLYNIFPWIMKYIPGSHQTVFRNWEKLKLFVSSMIDDHRKDWNPEEPRDFIDAFLKEMSKYPEKTTSFNEENLICSTLDLFFAGTETTSTTLRWALLYMALYPEVQEKVQAEIDRVIGQKRAASLADRESMPYTNAVIHEVQRMGNIIPLNVPREVAMDTTLNGFHLPKGTMVLTNLTALHRDPKEWATPDVFNPEHFLENGQFKKRESFLPFSMGKRACLGEQLARSELFIFFTSLMQKFTFKPPTNEKLSLKFRNGLTLSPVTHRICAVPRE.

2 helical membrane passes run 12-32 (IWAA…LLLA) and 77-97 (NIFS…LPLI). C447 contributes to the heme binding site.

The protein belongs to the cytochrome P450 family. It depends on heme as a cofactor. In terms of tissue distribution, expressed in small intestinal enterocytes (at protein level). In the intestinal crypt, expressed at higher levels in the mature villous cells than in undifferentiated crypt cells (at protein level). Expressed in liver, kidney, lung, and olfactory mucosa (at protein level).

The protein localises to the endoplasmic reticulum membrane. It is found in the microsome membrane. It catalyses the reaction an organic molecule + reduced [NADPH--hemoprotein reductase] + O2 = an alcohol + oxidized [NADPH--hemoprotein reductase] + H2O + H(+). The catalysed reaction is (5Z,8Z,11Z,14Z)-eicosatetraenoate + reduced [NADPH--hemoprotein reductase] + O2 = 19-hydroxy-(5Z,8Z,11Z,14Z)-eicosatetraenoate + oxidized [NADPH--hemoprotein reductase] + H2O + H(+). The enzyme catalyses all-trans-retinal + reduced [NADPH--hemoprotein reductase] + O2 = all-trans-retinoate + oxidized [NADPH--hemoprotein reductase] + H2O + 2 H(+). It carries out the reaction 9-cis-retinal + reduced [NADPH--hemoprotein reductase] + O2 = 9-cis-retinoate + oxidized [NADPH--hemoprotein reductase] + H2O + 2 H(+). The protein operates within lipid metabolism; arachidonate metabolism. It functions in the pathway cofactor metabolism; retinol metabolism. In terms of biological role, a cytochrome P450 monooxygenase that may play a major role in intestinal retinoid metabolism. Catalyzes the oxidative transformation of all-trans retinal and 9-cis-retinal to the corresponding active forms all-trans and 9-cis retinoic acids. Catalyzes the hydroxylation of carbon-hydrogen bonds. Hydroxylates arachidonic acid predominantly at the omega-1 position. Mechanistically, uses molecular oxygen inserting one oxygen atom into a substrate, and reducing the second into a water molecule, with two electrons provided by NADPH via cytochrome P450 reductase (CPR; NADPH--hemoprotein reductase). This Rattus norvegicus (Rat) protein is Cytochrome P450 2J4.